The primary structure comprises 206 residues: Large ribosomal subunit protein uL4 (206 aa).

Belongs to the universal ribosomal protein uL4 family. In terms of assembly, part of the 50S ribosomal subunit.

Its function is as follows. One of the primary rRNA binding proteins, this protein initially binds near the 5'-end of the 23S rRNA. It is important during the early stages of 50S assembly. It makes multiple contacts with different domains of the 23S rRNA in the assembled 50S subunit and ribosome. In terms of biological role, forms part of the polypeptide exit tunnel. The sequence is that of Large ribosomal subunit protein uL4 from Paracoccus denitrificans (strain Pd 1222).